The chain runs to 89 residues: Small ribosomal subunit protein uS15 (89 aa).

It belongs to the universal ribosomal protein uS15 family. In terms of assembly, part of the 30S ribosomal subunit. Forms a bridge to the 50S subunit in the 70S ribosome, contacting the 23S rRNA.

Its function is as follows. One of the primary rRNA binding proteins, it binds directly to 16S rRNA where it helps nucleate assembly of the platform of the 30S subunit by binding and bridging several RNA helices of the 16S rRNA. Forms an intersubunit bridge (bridge B4) with the 23S rRNA of the 50S subunit in the ribosome. The chain is Small ribosomal subunit protein uS15 from Actinobacillus pleuropneumoniae serotype 5b (strain L20).